A 332-amino-acid polypeptide reads, in one-letter code: L-lactate dehydrogenase A chain (332 aa).

Residues 29 to 57 and Arg-99 each bind NAD(+); that span reads GAVG…VEDK. Substrate contacts are provided by Arg-106, Asn-138, and Arg-169. Asn-138 provides a ligand contact to NAD(+). Catalysis depends on His-193, which acts as the Proton acceptor. Thr-248 contributes to the substrate binding site.

This sequence belongs to the LDH/MDH superfamily. LDH family. Homotetramer.

It localises to the cytoplasm. The catalysed reaction is (S)-lactate + NAD(+) = pyruvate + NADH + H(+). Its pathway is fermentation; pyruvate fermentation to lactate; (S)-lactate from pyruvate: step 1/1. Interconverts simultaneously and stereospecifically pyruvate and lactate with concomitant interconversion of NADH and NAD(+). This Columba livia (Rock dove) protein is L-lactate dehydrogenase A chain (LDHA).